We begin with the raw amino-acid sequence, 73 residues long: Potassium channel toxin alpha-KTx 27.1 (73 aa).

Residues 1 to 23 (MKFLFLTLFVCCFIAVLVIPSEA) form the signal peptide.

It belongs to the short scorpion toxin superfamily. Potassium channel inhibitor family. Alpha-KTx 27 subfamily. Contains 4 disulfide bonds. In terms of tissue distribution, expressed by the venom gland.

The protein resides in the secreted. This Buthus israelis (Israeli scorpion) protein is Potassium channel toxin alpha-KTx 27.1.